Consider the following 492-residue polypeptide: 3-octaprenyl-4-hydroxybenzoate carboxy-lyase (492 aa).

Asn-175 lines the Mn(2+) pocket. Prenylated FMN is bound by residues 178-180 (IYR), 192-194 (RWL), and 197-198 (RG). Glu-241 is a binding site for Mn(2+). Residue Asp-290 is the Proton donor of the active site.

Belongs to the UbiD family. As to quaternary structure, homohexamer. Prenylated FMN serves as cofactor. Mn(2+) is required as a cofactor.

It localises to the cell membrane. The catalysed reaction is a 4-hydroxy-3-(all-trans-polyprenyl)benzoate + H(+) = a 2-(all-trans-polyprenyl)phenol + CO2. It functions in the pathway cofactor biosynthesis; ubiquinone biosynthesis. In terms of biological role, catalyzes the decarboxylation of 3-octaprenyl-4-hydroxy benzoate to 2-octaprenylphenol, an intermediate step in ubiquinone biosynthesis. This Salmonella typhi protein is 3-octaprenyl-4-hydroxybenzoate carboxy-lyase.